The following is a 526-amino-acid chain: Tyrosine 2,3-aminomutase (526 aa).

Tyr-41 functions as the Proton donor/acceptor in the catalytic mechanism. Residue His-71 participates in substrate binding. The 5-imidazolinone (Ala-Gly) cross-link spans 130-132; that stretch reads ASG. Ser-131 carries the post-translational modification 2,3-didehydroalanine (Ser). Substrate-binding residues include Asn-183 and Arg-288.

The protein belongs to the TAL/TAM family. In terms of assembly, homotetramer; dimer of dimers. Post-translationally, contains an active site 4-methylidene-imidazol-5-one (MIO), which is formed autocatalytically by cyclization and dehydration of residues Ala-Ser-Gly.

The catalysed reaction is L-tyrosine = 3-amino-3-(4-hydroxyphenyl)propanoate. It carries out the reaction L-tyrosine = (E)-4-coumarate + NH4(+). In terms of biological role, has aminomutase and, to a much lesser extent, ammonia-lyase activity. Primarily, catalyzes the rearrangement of L-tyrosine to S-beta-tyrosine, which is probably incorporated into secondary metabolite myxovalargin. The aminomutase activity exclusively produces S-beta-tyrosine. The sequence is that of Tyrosine 2,3-aminomutase from Myxococcus sp. (strain Mx-B0).